Here is a 173-residue protein sequence, read N- to C-terminus: Peptide methionine sulfoxide reductase MsrA (173 aa).

Residue Cys-10 is part of the active site.

This sequence belongs to the MsrA Met sulfoxide reductase family.

The enzyme catalyses L-methionyl-[protein] + [thioredoxin]-disulfide + H2O = L-methionyl-(S)-S-oxide-[protein] + [thioredoxin]-dithiol. The catalysed reaction is [thioredoxin]-disulfide + L-methionine + H2O = L-methionine (S)-S-oxide + [thioredoxin]-dithiol. Functionally, has an important function as a repair enzyme for proteins that have been inactivated by oxidation. Catalyzes the reversible oxidation-reduction of methionine sulfoxide in proteins to methionine. This is Peptide methionine sulfoxide reductase MsrA from Psychrobacter arcticus (strain DSM 17307 / VKM B-2377 / 273-4).